Consider the following 150-residue polypeptide: Phosphoribosyl-AMP cyclohydrolase (150 aa).

Aspartate 93 contacts Mg(2+). Cysteine 94 serves as a coordination point for Zn(2+). Aspartate 95 and aspartate 97 together coordinate Mg(2+). Zn(2+)-binding residues include cysteine 112 and cysteine 119.

The protein belongs to the PRA-CH family. Homodimer. The cofactor is Mg(2+). Zn(2+) is required as a cofactor.

It localises to the cytoplasm. It carries out the reaction 1-(5-phospho-beta-D-ribosyl)-5'-AMP + H2O = 1-(5-phospho-beta-D-ribosyl)-5-[(5-phospho-beta-D-ribosylamino)methylideneamino]imidazole-4-carboxamide. The protein operates within amino-acid biosynthesis; L-histidine biosynthesis; L-histidine from 5-phospho-alpha-D-ribose 1-diphosphate: step 3/9. Catalyzes the hydrolysis of the adenine ring of phosphoribosyl-AMP. This Rhizobium etli (strain ATCC 51251 / DSM 11541 / JCM 21823 / NBRC 15573 / CFN 42) protein is Phosphoribosyl-AMP cyclohydrolase.